The sequence spans 248 residues: Ureidoacrylate amidohydrolase RutB (248 aa).

The active-site Proton acceptor is the aspartate 41. Residue lysine 150 is part of the active site. Cysteine 183 functions as the Nucleophile in the catalytic mechanism.

Belongs to the isochorismatase family. RutB subfamily.

It catalyses the reaction (Z)-3-ureidoacrylate + H2O + H(+) = (Z)-3-aminoacrylate + NH4(+) + CO2. It carries out the reaction (Z)-3-ureidoacrylate + H2O = (Z)-3-aminoacrylate + carbamate + H(+). The catalysed reaction is (Z)-2-methylureidoacrylate + H2O + H(+) = (Z)-2-methylaminoacrylate + NH4(+) + CO2. Its function is as follows. Hydrolyzes ureidoacrylate to form aminoacrylate and carbamate. The carbamate hydrolyzes spontaneously, thereby releasing one of the nitrogen atoms of the pyrimidine ring as ammonia and one of its carbon atoms as CO2. This chain is Ureidoacrylate amidohydrolase RutB, found in Methylorubrum extorquens (strain DSM 6343 / CIP 106787 / DM4) (Methylobacterium extorquens).